The primary structure comprises 72 residues: Translation initiation factor IF-1 1 (72 aa).

One can recognise an S1-like domain in the interval 1–72 (MSKDDVIQMA…TRARIIFRAK (72 aa)).

This sequence belongs to the IF-1 family. In terms of assembly, component of the 30S ribosomal translation pre-initiation complex which assembles on the 30S ribosome in the order IF-2 and IF-3, IF-1 and N-formylmethionyl-tRNA(fMet); mRNA recruitment can occur at any time during PIC assembly.

Its subcellular location is the cytoplasm. In terms of biological role, one of the essential components for the initiation of protein synthesis. Stabilizes the binding of IF-2 and IF-3 on the 30S subunit to which N-formylmethionyl-tRNA(fMet) subsequently binds. Helps modulate mRNA selection, yielding the 30S pre-initiation complex (PIC). Upon addition of the 50S ribosomal subunit IF-1, IF-2 and IF-3 are released leaving the mature 70S translation initiation complex. The polypeptide is Translation initiation factor IF-1 1 (Polynucleobacter asymbioticus (strain DSM 18221 / CIP 109841 / QLW-P1DMWA-1) (Polynucleobacter necessarius subsp. asymbioticus)).